The following is a 620-amino-acid chain: Chaperone protein HscA homolog (620 aa).

The protein belongs to the heat shock protein 70 family.

Chaperone involved in the maturation of iron-sulfur cluster-containing proteins. Has a low intrinsic ATPase activity which is markedly stimulated by HscB. This Shewanella sp. (strain MR-4) protein is Chaperone protein HscA homolog.